We begin with the raw amino-acid sequence, 157 residues long: Transcriptional regulator MraZ (157 aa).

2 SpoVT-AbrB domains span residues 7–52 (TYTM…AGGN) and 83–126 (SETL…EPER).

The protein belongs to the MraZ family. As to quaternary structure, forms oligomers.

It localises to the cytoplasm. Its subcellular location is the nucleoid. In Xanthobacter autotrophicus (strain ATCC BAA-1158 / Py2), this protein is Transcriptional regulator MraZ.